Reading from the N-terminus, the 392-residue chain is Protein O-glucosyltransferase 1 (392 aa).

Positions 1 to 23 are cleaved as a signal peptide; the sequence is MERLSGCRLRPWMLLLLLFPVQG. Intrachain disulfides connect Cys-49/Cys-56, Cys-54/Cys-357, Cys-102/Cys-108, and Cys-263/Cys-286. An N-linked (GlcNAc...) asparagine glycan is attached at Asn-53. An interaction with the consensus sequence C-X-S-X-[PA]-C in peptide substrates region spans residues 103–107; sequence MFPSR. The Proton donor/acceptor role is filled by Asp-133. The interval 172–178 is interaction with the consensus sequence C-X-S-X-[PA]-C in peptide substrates; that stretch reads AVWPLYP. Residue Tyr-177 participates in UDP-alpha-D-glucose binding. An N-linked (GlcNAc...) asparagine glycan is attached at Asn-204. UDP-alpha-D-glucose is bound by residues Ser-212, Arg-218, and 274 to 279; that span reads VAASFR. The N-linked (GlcNAc...) asparagine glycan is linked to Asn-373. Residues 389–392 carry the Prevents secretion from ER motif; the sequence is KTEL.

Belongs to the glycosyltransferase 90 family.

It is found in the endoplasmic reticulum lumen. It carries out the reaction L-seryl-[EGF-like domain protein] + UDP-alpha-D-xylose = 3-O-(beta-D-xylosyl)-L-seryl-[EGF-like domain protein] + UDP + H(+). The catalysed reaction is L-seryl-[EGF-like domain protein] + UDP-alpha-D-glucose = 3-O-(beta-D-glucosyl)-L-seryl-[EGF-like domain protein] + UDP + H(+). It functions in the pathway protein modification; protein glycosylation. In terms of biological role, dual specificity glycosyltransferase that catalyzes the transfer of glucose and xylose from UDP-glucose and UDP-xylose, respectively, to a serine residue found in the consensus sequence of C-X-S-X-P-C. Specifically targets extracellular EGF repeats of protein such as CRB2, F7, F9 and NOTCH2. Acts as a positive regulator of Notch signaling by mediating O-glucosylation of Notch, leading to regulate muscle development. Notch glucosylation does not affect Notch ligand binding. Required during early development to promote gastrulation: acts by mediating O-glucosylation of CRB2, which is required for CRB2 localization to the cell membrane. The protein is Protein O-glucosyltransferase 1 (Poglut1) of Rattus norvegicus (Rat).